A 592-amino-acid polypeptide reads, in one-letter code: Serine/threonine-protein kinase ksg1 (592 aa).

Over residues 1-10 (MRNTHNPNET) the composition is skewed to polar residues. Residues 1–92 (MRNTHNPNET…NPSSGASTPN (92 aa)) are disordered. The span at 11-22 (EASEDAENDTQS) shows a compositional bias: acidic residues. Residues 27–37 (SFDHGSSEKLN) are compositionally biased toward basic and acidic residues. Residues 42–68 (PKTQNSAIPQSNALNTTPNESTSQIDS) show a composition bias toward polar residues. Phosphoserine is present on residues Ser-64 and Ser-69. Positions 80 to 92 (STPNPSSGASTPN) are enriched in polar residues. The Protein kinase domain maps to 99–366 (FKFGEILGEG…VDEIHQHPFF (268 aa)). ATP contacts are provided by residues 109 to 111 (SYS) and Lys-128. The segment at 130–175 (LDKRHIIKEKKEKYVNIEKEALCILSKHPGFIKLFYTFQDAHNLYF) is PIF-pocket. Residues 178–180 (SLA) and Glu-184 each bind ATP. Catalysis depends on Asp-223, which acts as the Proton acceptor. ATP-binding residues include Glu-227 and Asp-241. Residues 461-572 (ISKIGTLNVY…ELLDKASSIS (112 aa)) form the PH domain.

This sequence belongs to the protein kinase superfamily. AGC Ser/Thr protein kinase family. PDPK1 subfamily.

It localises to the cytoplasm. It catalyses the reaction L-seryl-[protein] + ATP = O-phospho-L-seryl-[protein] + ADP + H(+). The enzyme catalyses L-threonyl-[protein] + ATP = O-phospho-L-threonyl-[protein] + ADP + H(+). Its function is as follows. Involved in the control of sexual development and cell growth under stressed conditions. Phosphorylates AGC kinase gad8 at 'Thr-387', activating gad8 kinase activity and promoting sexual development. Phosphorylates AGC kinase psk1 at 'Ser-248', activating psk1 kinase activity and promoting phosphorylation of ribosomal protein S6. The polypeptide is Serine/threonine-protein kinase ksg1 (Schizosaccharomyces pombe (strain 972 / ATCC 24843) (Fission yeast)).